The sequence spans 433 residues: Bifunctional protein GlmU (433 aa).

The pyrophosphorylase stretch occupies residues M1 to Q226. Residues L7–G10, K21, and G80–T81 contribute to the UDP-N-acetyl-alpha-D-glucosamine site. D106 is a Mg(2+) binding site. 4 residues coordinate UDP-N-acetyl-alpha-D-glucosamine: G138, E152, N167, and N224. Residue N224 coordinates Mg(2+). A linker region spans residues T227–L247. The N-acetyltransferase stretch occupies residues G248–P433. UDP-N-acetyl-alpha-D-glucosamine-binding residues include R311 and K328. H339 functions as the Proton acceptor in the catalytic mechanism. UDP-N-acetyl-alpha-D-glucosamine contacts are provided by Y342 and N353. Acetyl-CoA contacts are provided by residues A356, N362–Y363, S381, S399, and R416.

It in the N-terminal section; belongs to the N-acetylglucosamine-1-phosphate uridyltransferase family. The protein in the C-terminal section; belongs to the transferase hexapeptide repeat family. In terms of assembly, homotrimer. It depends on Mg(2+) as a cofactor.

The protein resides in the cytoplasm. It catalyses the reaction alpha-D-glucosamine 1-phosphate + acetyl-CoA = N-acetyl-alpha-D-glucosamine 1-phosphate + CoA + H(+). The catalysed reaction is N-acetyl-alpha-D-glucosamine 1-phosphate + UTP + H(+) = UDP-N-acetyl-alpha-D-glucosamine + diphosphate. The protein operates within nucleotide-sugar biosynthesis; UDP-N-acetyl-alpha-D-glucosamine biosynthesis; N-acetyl-alpha-D-glucosamine 1-phosphate from alpha-D-glucosamine 6-phosphate (route II): step 2/2. It participates in nucleotide-sugar biosynthesis; UDP-N-acetyl-alpha-D-glucosamine biosynthesis; UDP-N-acetyl-alpha-D-glucosamine from N-acetyl-alpha-D-glucosamine 1-phosphate: step 1/1. Its pathway is bacterial outer membrane biogenesis; LPS lipid A biosynthesis. Its function is as follows. Catalyzes the last two sequential reactions in the de novo biosynthetic pathway for UDP-N-acetylglucosamine (UDP-GlcNAc). The C-terminal domain catalyzes the transfer of acetyl group from acetyl coenzyme A to glucosamine-1-phosphate (GlcN-1-P) to produce N-acetylglucosamine-1-phosphate (GlcNAc-1-P), which is converted into UDP-GlcNAc by the transfer of uridine 5-monophosphate (from uridine 5-triphosphate), a reaction catalyzed by the N-terminal domain. The sequence is that of Bifunctional protein GlmU from Helicobacter pylori (strain ATCC 700392 / 26695) (Campylobacter pylori).